We begin with the raw amino-acid sequence, 479 residues long: Zinc metalloproteinase/disintegrin PMMP-1 (479 aa).

A signal peptide spans 1 to 20 (MIQVLLVTICLAVFPYQGSS). A propeptide spanning residues 21–188 (IILESGNVND…PIKKASKLVV (168 aa)) is cleaved from the precursor. The Peptidase M12B domain maps to 194–390 (RYVELVIVAD…HNPQCILNKP (197 aa)). 3 disulfide bridges follow: cysteine 305–cysteine 385, cysteine 345–cysteine 369, and cysteine 347–cysteine 352. Histidine 330 lines the Zn(2+) pocket. The active site involves glutamate 331. 2 residues coordinate Zn(2+): histidine 334 and histidine 339. Asparagine 368 is a glycosylation site (N-linked (GlcNAc...) asparagine). Residues 391–408 (LRTDTVSTPVSGNELLEA) constitute a propeptide that is removed on maturation. The region spanning 398–479 (TPVSGNELLE…ADCPRNGLYG (82 aa)) is the Disintegrin domain. 6 cysteine pairs are disulfide-bonded: cysteine 412–cysteine 427, cysteine 414–cysteine 422, cysteine 421–cysteine 444, cysteine 435–cysteine 441, cysteine 440–cysteine 465, and cysteine 453–cysteine 472. Residues 457-459 (RGD) carry the Cell attachment site motif.

The protein belongs to the venom metalloproteinase (M12B) family. P-II subfamily. P-IIa sub-subfamily. As to quaternary structure, monomer. Requires Zn(2+) as cofactor. Expressed by the venom gland.

The protein resides in the secreted. Its function is as follows. Impairs hemostasis in the envenomed animal. In terms of biological role, inhibits platelet aggregation. In Protobothrops mucrosquamatus (Taiwan habu), this protein is Zinc metalloproteinase/disintegrin PMMP-1.